Reading from the N-terminus, the 366-residue chain is tRNA/tmRNA (uracil-C(5))-methyltransferase (366 aa).

S-adenosyl-L-methionine contacts are provided by glutamine 190, tyrosine 218, asparagine 223, glutamate 239, and aspartate 299. Catalysis depends on cysteine 324, which acts as the Nucleophile. The Proton acceptor role is filled by glutamate 358.

It belongs to the class I-like SAM-binding methyltransferase superfamily. RNA M5U methyltransferase family. TrmA subfamily.

The enzyme catalyses uridine(54) in tRNA + S-adenosyl-L-methionine = 5-methyluridine(54) in tRNA + S-adenosyl-L-homocysteine + H(+). It catalyses the reaction uridine(341) in tmRNA + S-adenosyl-L-methionine = 5-methyluridine(341) in tmRNA + S-adenosyl-L-homocysteine + H(+). Functionally, dual-specificity methyltransferase that catalyzes the formation of 5-methyluridine at position 54 (m5U54) in all tRNAs, and that of position 341 (m5U341) in tmRNA (transfer-mRNA). This chain is tRNA/tmRNA (uracil-C(5))-methyltransferase, found in Salmonella paratyphi A (strain ATCC 9150 / SARB42).